The chain runs to 212 residues: Lysozyme g-like protein 2 (212 aa).

The N-terminal stretch at 1-19 (MLSSVVFWGLIALIGTSRG) is a signal peptide. Cystine bridges form between cysteine 39–cysteine 92 and cysteine 53–cysteine 61. Residue glutamate 105 is part of the active site.

Belongs to the glycosyl hydrolase 23 family. In terms of tissue distribution, strong expression detected in the eye and weak expression in the testis. No expression is observed in any other tissues.

Its subcellular location is the secreted. In terms of biological role, may act as a potent antibacterial protein that may play a role in the innate immunity. This Homo sapiens (Human) protein is Lysozyme g-like protein 2 (LYG2).